The primary structure comprises 203 residues: Mitotic spindle checkpoint component mad2 (203 aa).

Positions 13-197 (KGSSKLVSEF…TSMHKIDCQV (185 aa)) constitute an HORMA domain.

It belongs to the MAD2 family. Interacts with mad3 and slp1.

The protein resides in the nucleus. Functionally, feedback control that prevents cells with incompletely assembled spindles from leaving mitosis. It interacts with the anaphase promoting complex/cyclosome (APC/C) thereby inhibiting APC/C-dependent proteolysis, a step required for exit from mitosis. This chain is Mitotic spindle checkpoint component mad2, found in Schizosaccharomyces pombe (strain 972 / ATCC 24843) (Fission yeast).